The following is a 125-amino-acid chain: Large ribosomal subunit protein mL51 (125 aa).

The transit peptide at 1–29 (MWSVQQLLWGCRSLLTQGCRSFSLGSRDL) directs the protein to the mitochondrion.

The protein belongs to the mitochondrion-specific ribosomal protein mL51 family. As to quaternary structure, component of the mitochondrial ribosome large subunit (39S) which comprises a 16S rRNA and about 50 distinct proteins.

The protein resides in the mitochondrion. The protein is Large ribosomal subunit protein mL51 (mrpl51) of Xenopus tropicalis (Western clawed frog).